We begin with the raw amino-acid sequence, 399 residues long: Fe-coproporphyrin III synthase (399 aa).

Residues 36-253 enclose the Radical SAM core domain; it reads KDKKPVVVWN…TRKLHEKGFP (218 aa). The [4Fe-4S] cluster site is built by Cys-50, Cys-54, and Cys-57.

Belongs to the radical SAM superfamily. [4Fe-4S] cluster serves as cofactor.

The enzyme catalyses 12,18-didecarboxysiroheme + 2 AH2 + 2 S-adenosyl-L-methionine = Fe-coproporphyrin III + 2 5'-deoxyadenosine + 2 L-methionine + 2 acetate + 2 A + 2 H(+). It participates in porphyrin-containing compound metabolism; protoheme biosynthesis. Involved in siroheme-dependent heme b biosynthesis. Catalyzes the conversion of didecarboxysiroheme into Fe-coproporphyrin III by oxidative loss of two acetic acid side chains. This is Fe-coproporphyrin III synthase from Methanosarcina barkeri (strain Fusaro / DSM 804).